The primary structure comprises 186 residues: ATP synthase subunit delta (186 aa).

It belongs to the ATPase delta chain family. F-type ATPases have 2 components, F(1) - the catalytic core - and F(0) - the membrane proton channel. F(1) has five subunits: alpha(3), beta(3), gamma(1), delta(1), epsilon(1). F(0) has three main subunits: a(1), b(2) and c(10-14). The alpha and beta chains form an alternating ring which encloses part of the gamma chain. F(1) is attached to F(0) by a central stalk formed by the gamma and epsilon chains, while a peripheral stalk is formed by the delta and b chains.

It localises to the cell inner membrane. F(1)F(0) ATP synthase produces ATP from ADP in the presence of a proton or sodium gradient. F-type ATPases consist of two structural domains, F(1) containing the extramembraneous catalytic core and F(0) containing the membrane proton channel, linked together by a central stalk and a peripheral stalk. During catalysis, ATP synthesis in the catalytic domain of F(1) is coupled via a rotary mechanism of the central stalk subunits to proton translocation. In terms of biological role, this protein is part of the stalk that links CF(0) to CF(1). It either transmits conformational changes from CF(0) to CF(1) or is implicated in proton conduction. The polypeptide is ATP synthase subunit delta (Bacteroides thetaiotaomicron (strain ATCC 29148 / DSM 2079 / JCM 5827 / CCUG 10774 / NCTC 10582 / VPI-5482 / E50)).